The following is a 157-amino-acid chain: Cyclic pyranopterin monophosphate synthase (157 aa).

Residues 74–76 (MCH) and 112–113 (ME) each bind substrate. Asp127 is a catalytic residue.

It belongs to the MoaC family. In terms of assembly, homohexamer; trimer of dimers.

The enzyme catalyses (8S)-3',8-cyclo-7,8-dihydroguanosine 5'-triphosphate = cyclic pyranopterin phosphate + diphosphate. It participates in cofactor biosynthesis; molybdopterin biosynthesis. Catalyzes the conversion of (8S)-3',8-cyclo-7,8-dihydroguanosine 5'-triphosphate to cyclic pyranopterin monophosphate (cPMP). The polypeptide is Cyclic pyranopterin monophosphate synthase (Campylobacter jejuni (strain RM1221)).